Here is a 137-residue protein sequence, read N- to C-terminus: Protein LTO1 homolog (137 aa).

Residue Ala2 is modified to N-acetylalanine. Residues 22-58 (GYQEGYEEGSSLGIVEGKRYGMVHGAKIGSEIGCYRG) form a deca-GX3 motif; required for interaction with YAE1 and the CIA complex region.

The protein belongs to the LTO1 family. Forms a complex with YAE1. Interacts with PYCR1 and PYCR2.

It localises to the nucleus. The complex LTO1:YAE1 functions as a target specific adapter that probably recruits apo-ABCE1 to the cytosolic iron-sulfur protein assembly (CIA) complex machinery. May be required for biogenesis of the large ribosomal subunit and initiation of translation. May play a role in the regulation of proline metabolism and ROS production. The protein is Protein LTO1 homolog of Mus musculus (Mouse).